The following is a 247-amino-acid chain: Uridylate kinase (247 aa).

18-21 contributes to the ATP binding site; that stretch reads KLSG. G60 contributes to the UMP binding site. Residues G61 and R65 each contribute to the ATP site. UMP is bound by residues D80 and 141-148; that span reads TGNPFFTT. ATP contacts are provided by T168, Y174, and D177.

This sequence belongs to the UMP kinase family. As to quaternary structure, homohexamer.

It localises to the cytoplasm. It carries out the reaction UMP + ATP = UDP + ADP. It functions in the pathway pyrimidine metabolism; CTP biosynthesis via de novo pathway; UDP from UMP (UMPK route): step 1/1. Its activity is regulated as follows. Inhibited by UTP. In terms of biological role, catalyzes the reversible phosphorylation of UMP to UDP. The protein is Uridylate kinase of Ectopseudomonas mendocina (strain ymp) (Pseudomonas mendocina).